The chain runs to 222 residues: Embryonic stem cell-related gene protein (222 aa).

As to expression, expressed only in fetal ovary and in undifferentiated ES cells.

The protein localises to the nucleus. The chain is Embryonic stem cell-related gene protein (ESRG) from Homo sapiens (Human).